The chain runs to 356 residues: GTPase Obg (356 aa).

The region spanning 1-159 is the Obg domain; that stretch reads MKFLDEAKVY…RWIWLRMKLI (159 aa). One can recognise an OBG-type G domain in the interval 160 to 327; it reads ADAGLVGLPN…VLRALTDVIS (168 aa). Residues 166–173, 191–195, 212–215, 279–282, and 308–310 each bind GTP; these read GLPNAGKS, FTTLH, DIPG, NKID, and SGV. Mg(2+) contacts are provided by Ser173 and Thr193. Residues 329–356 are disordered; it reads APVSTKAKGEPTENETPPPSTGWSPLSN.

It belongs to the TRAFAC class OBG-HflX-like GTPase superfamily. OBG GTPase family. Monomer. Mg(2+) is required as a cofactor.

The protein resides in the cytoplasm. Its function is as follows. An essential GTPase which binds GTP, GDP and possibly (p)ppGpp with moderate affinity, with high nucleotide exchange rates and a fairly low GTP hydrolysis rate. Plays a role in control of the cell cycle, stress response, ribosome biogenesis and in those bacteria that undergo differentiation, in morphogenesis control. The polypeptide is GTPase Obg (Afipia carboxidovorans (strain ATCC 49405 / DSM 1227 / KCTC 32145 / OM5) (Oligotropha carboxidovorans)).